We begin with the raw amino-acid sequence, 392 residues long: Adenine nucleotide transporter BT1, chloroplastic/mitochondrial (392 aa).

Solcar repeat units lie at residues Asn108 to Lys191, Ile202 to Ala286, and Ile296 to Ile384. A run of 6 helical transmembrane segments spans residues Arg113–Thr133, Leu168–Val188, Ile204–Pro224, Ala263–Leu283, Leu302–Ala322, and Gly359–Glu379.

Belongs to the mitochondrial carrier (TC 2.A.29) family. As to expression, expressed in root tips, the central cylinder of young roots, and maturating and germinating pollen.

It is found in the plastid. The protein resides in the chloroplast inner membrane. The protein localises to the mitochondrion inner membrane. With respect to regulation, inhibited by pyridoxal 5-phosphate but not mersalyl. In terms of biological role, probable mitochondrial adenylate carrier that catalyzes the transport of ATP, ADP and AMP, but not ADP-glucose. Recombinant BT1 shows a unidirectional mode of transport in intact E.coli cells. May function as a plastidial nucleotide uniport carrier required to export newly synthesized adenylates into the cytosol. May be involved in abiotic stress response. This chain is Adenine nucleotide transporter BT1, chloroplastic/mitochondrial (BT1), found in Arabidopsis thaliana (Mouse-ear cress).